The chain runs to 315 residues: Homoserine O-succinyltransferase (315 aa).

Cys-142 (acyl-thioester intermediate) is an active-site residue. Substrate contacts are provided by Lys-163 and Ser-192. The active-site Proton acceptor is His-235. Glu-237 is a catalytic residue. Arg-249 contacts substrate.

The protein belongs to the MetA family.

Its subcellular location is the cytoplasm. It catalyses the reaction L-homoserine + succinyl-CoA = O-succinyl-L-homoserine + CoA. It participates in amino-acid biosynthesis; L-methionine biosynthesis via de novo pathway; O-succinyl-L-homoserine from L-homoserine: step 1/1. Transfers a succinyl group from succinyl-CoA to L-homoserine, forming succinyl-L-homoserine. The protein is Homoserine O-succinyltransferase of Tolumonas auensis (strain DSM 9187 / NBRC 110442 / TA 4).